We begin with the raw amino-acid sequence, 306 residues long: Tyrosine recombinase XerC (306 aa).

Residues 6-92 form the Core-binding (CB) domain; that stretch reads NTLYLQTKPY…ALRQWFSYLI (87 aa). The Tyr recombinase domain occupies 113 to 292; that stretch reads RLPKNIDAEQ…DFQHLAKIYD (180 aa). Active-site residues include R152, K176, H244, R247, and H270. The O-(3'-phospho-DNA)-tyrosine intermediate role is filled by Y279.

Belongs to the 'phage' integrase family. XerC subfamily. As to quaternary structure, forms a cyclic heterotetrameric complex composed of two molecules of XerC and two molecules of XerD.

The protein localises to the cytoplasm. Site-specific tyrosine recombinase, which acts by catalyzing the cutting and rejoining of the recombining DNA molecules. The XerC-XerD complex is essential to convert dimers of the bacterial chromosome into monomers to permit their segregation at cell division. It also contributes to the segregational stability of plasmids. This chain is Tyrosine recombinase XerC, found in Actinobacillus pleuropneumoniae serotype 7 (strain AP76).